The chain runs to 457 residues: tRNA-2-methylthio-N(6)-dimethylallyladenosine synthase (457 aa).

The MTTase N-terminal domain maps to 3-120 (KKVYVKTFGC…LPQMIDARRE (118 aa)). Positions 12, 49, 83, 157, 161, and 164 each coordinate [4Fe-4S] cluster. The 235-residue stretch at 143-377 (RVEGPSAFVS…QATIEENVAR (235 aa)) folds into the Radical SAM core domain. Residues 380–447 (QSMLGKVERI…PHSLRGELVL (68 aa)) enclose the TRAM domain.

The protein belongs to the methylthiotransferase family. MiaB subfamily. As to quaternary structure, monomer. It depends on [4Fe-4S] cluster as a cofactor.

The protein localises to the cytoplasm. It catalyses the reaction N(6)-dimethylallyladenosine(37) in tRNA + (sulfur carrier)-SH + AH2 + 2 S-adenosyl-L-methionine = 2-methylsulfanyl-N(6)-dimethylallyladenosine(37) in tRNA + (sulfur carrier)-H + 5'-deoxyadenosine + L-methionine + A + S-adenosyl-L-homocysteine + 2 H(+). Catalyzes the methylthiolation of N6-(dimethylallyl)adenosine (i(6)A), leading to the formation of 2-methylthio-N6-(dimethylallyl)adenosine (ms(2)i(6)A) at position 37 in tRNAs that read codons beginning with uridine. This is tRNA-2-methylthio-N(6)-dimethylallyladenosine synthase from Burkholderia mallei (strain NCTC 10247).